Reading from the N-terminus, the 237-residue chain is Phosphoribosylaminoimidazole-succinocarboxamide synthase (237 aa).

This sequence belongs to the SAICAR synthetase family.

It carries out the reaction 5-amino-1-(5-phospho-D-ribosyl)imidazole-4-carboxylate + L-aspartate + ATP = (2S)-2-[5-amino-1-(5-phospho-beta-D-ribosyl)imidazole-4-carboxamido]succinate + ADP + phosphate + 2 H(+). Its pathway is purine metabolism; IMP biosynthesis via de novo pathway; 5-amino-1-(5-phospho-D-ribosyl)imidazole-4-carboxamide from 5-amino-1-(5-phospho-D-ribosyl)imidazole-4-carboxylate: step 1/2. The sequence is that of Phosphoribosylaminoimidazole-succinocarboxamide synthase from Yersinia pseudotuberculosis serotype O:1b (strain IP 31758).